Reading from the N-terminus, the 125-residue chain is Mitochondrial import inner membrane translocase subunit TIM16 (125 aa).

The tract at residues 58 to 110 (EAQQILNVSKLSPEEVQKNYEHLFKVNDKSVGGSFYLQSKVVRAKERLDEELR) is J-like. Ser69 bears the Phosphoserine mark.

This sequence belongs to the TIM16/PAM16 family. Probable component of the PAM complex at least composed of a mitochondrial HSP70 protein, GRPEL1 or GRPEL2, TIMM44, TIMM16/PAM16 and TIMM14/DNAJC19. Interacts with DNAJC19. Directly interacts with DNAJC15; this interaction counteracts DNAJC15-dependent stimulation of HSPA9 ATPase activity. Associates with the TIM23 complex. As to expression, expressed in trabecular bone and cartilage and by differentiated chondrocytes localized in the hypertrophic zone and by osteoblasts at early developmental stages.

The protein resides in the mitochondrion inner membrane. In terms of biological role, regulates ATP-dependent protein translocation into the mitochondrial matrix. Inhibits DNAJC19 stimulation of HSPA9/Mortalin ATPase activity. This is Mitochondrial import inner membrane translocase subunit TIM16 from Mus musculus (Mouse).